The following is a 452-amino-acid chain: Keratin, type I cytoskeletal 42 (452 aa).

Positions 4 to 93 are head; sequence TTSIRQFSTS…GVSDALLGGS (90 aa). Coiled-coil stretches lie at residues 93–132 and 188–407; these read SEKE…WYKK and NLRM…HLAT. The coil 1A stretch occupies residues 94–129; the sequence is EKETMQNLNDRLATYLDRVRALEEANTDLEVKIREW. An IF rod domain is found at 94–405; the sequence is EKETMQNLND…RLLEGEDAHL (312 aa). Positions 130–147 are linker 1; the sequence is YKKQGPGPARDYSPYFKT. The tract at residues 148 to 239 is coil 1B; sequence IEDLRNKILA…KNHEEEMNAL (92 aa). Residues 240–262 form a linker 12 region; that stretch reads RGQVGGDVNVEMDAAPGVDLSRI. Residues 263–401 form a coil 2 region; sequence LNEMRDQYEK…ATYRRLLEGE (139 aa). Positions 402–452 are tail; the sequence is DAHLATQYSSSLASQASREGTVTSRQVRTIVEEVQDGKVVSSREQVHRSTH.

Belongs to the intermediate filament family. In terms of assembly, heterodimer of a type I and a type II keratin. Colocalizes with KRT8/KRT18 filament network.

It is found in the cytoplasm. In Rattus norvegicus (Rat), this protein is Keratin, type I cytoskeletal 42.